We begin with the raw amino-acid sequence, 318 residues long: Putative 2-hydroxyacid dehydrogenase SH0752 (318 aa).

Residues 155–156 (EI), 234–236 (AGR), and aspartate 260 contribute to the NAD(+) site. Arginine 236 is an active-site residue. Glutamate 265 is a catalytic residue. The active-site Proton donor is the histidine 283. Residue 283–286 (HIGN) coordinates NAD(+).

Belongs to the D-isomer specific 2-hydroxyacid dehydrogenase family.

The protein is Putative 2-hydroxyacid dehydrogenase SH0752 of Staphylococcus haemolyticus (strain JCSC1435).